The primary structure comprises 251 residues: Flap endonuclease Xni (251 aa).

D104 provides a ligand contact to Mg(2+). The region spanning 160–249 (VQPQQLPDYW…IDGNLQQLRL (90 aa)) is the 5'-3' exonuclease domain. K(+)-binding residues include L171, A172, P180, V182, and I185. The segment at 184–189 (GIGPKS) is interaction with DNA.

The protein belongs to the Xni family. Mg(2+) is required as a cofactor. K(+) serves as cofactor.

Has flap endonuclease activity. During DNA replication, flap endonucleases cleave the 5'-overhanging flap structure that is generated by displacement synthesis when DNA polymerase encounters the 5'-end of a downstream Okazaki fragment. This is Flap endonuclease Xni from Shigella flexneri serotype 5b (strain 8401).